The sequence spans 403 residues: Zinc finger HIT domain-containing protein 2 (403 aa).

M1 is modified (N-acetylmethionine). 8 residues coordinate Zn(2+): C7, C10, C22, C25, C30, C34, H38, and C41. The HIT-type zinc-finger motif lies at 7 to 41 (CGFCPAGEVQPARYTCPRCNAPYCSLRCYRTHGTC). Residues 72-98 (RQQRETEDEPGEAGLSSGPAPGGLSGL) form a disordered region. Position 161 is a phosphothreonine (T161).

As to quaternary structure, interacts (via HIT-type zinc finger) with RUVBL2 in the presence of ATP or ADP; shows a stronger interaction in the presence of ADP. In terms of tissue distribution, low expression in most tissues; highly expressed in testis.

In terms of biological role, may act as a bridging factor mediating the interaction between the R2TP/Prefoldin-like (R2TP/PFDL) complex and U5 small nuclear ribonucleoprotein (U5 snRNP). Required for the interaction of R2TP complex subunit RPAP3 and prefoldin-like subunit URI1 with U5 snRNP proteins EFTUD2 and PRPF8. May play a role in regulating the composition of the U5 snRNP complex. This is Zinc finger HIT domain-containing protein 2 (ZNHIT2) from Homo sapiens (Human).